Here is a 502-residue protein sequence, read N- to C-terminus: MSRFISTFRSSSAQLSIVLAVILATGCSQPTTLQEIREEGVLHVITRVAPSIYYQDREQDTGYDYELARLFANELGVELRVRVADDNSEILSVLSRNYAHVGLAGLTQRPDFDNQYRSVPIGVSAQSVIVYHKEVPAPESLEDLASETIHMLADSNHEHLIADPANEAGPIIQKHPGLDAAGLLARVESGEFGYAAVASNELDLNHVFFPKVYEAFALNEPSDLVWLFPAAQDDTLVNAAEAFMERVNNNGTMAQLAERFYGHLDRLNYVGARTFMHHVENRLPRYQSLFKDYAQESGMDWRLLAAIGYQESHWRPNAVSPTGVRGLMMLTRTTANYIGINNRLDAEESIEGGARYFRMVHGRIPDRIPEPDRTWFALASYNVGFGHLEDARRLAESAGKDPDRWMDVKEFLPLLAQKEWYTKTRFGYARGHEPVVYVQNIRRYYDVLVRITEPDAPSASGLEDQLAWLGDNEAGPEAPAKESQPDLRADLPPELRLIPPTL.

An N-terminal signal peptide occupies residues 1-33 (MSRFISTFRSSSAQLSIVLAVILATGCSQPTTL). The segment at 34–264 (QEIREEGVLH…QLAERFYGHL (231 aa)) is non-LT domain. An LT domain region spans residues 265-502 (DRLNYVGART…PELRLIPPTL (238 aa)). Residue Glu311 is part of the active site. The tract at residues 457-502 (PSASGLEDQLAWLGDNEAGPEAPAKESQPDLRADLPPELRLIPPTL) is disordered. The segment covering 479 to 493 (PAKESQPDLRADLPP) has biased composition (basic and acidic residues).

In the N-terminal section; belongs to the bacterial solute-binding protein 3 family. It in the C-terminal section; belongs to the transglycosylase Slt family.

The protein resides in the cell outer membrane. The catalysed reaction is Exolytic cleavage of the (1-&gt;4)-beta-glycosidic linkage between N-acetylmuramic acid (MurNAc) and N-acetylglucosamine (GlcNAc) residues in peptidoglycan, from either the reducing or the non-reducing ends of the peptidoglycan chains, with concomitant formation of a 1,6-anhydrobond in the MurNAc residue.. Murein-degrading enzyme that degrades murein glycan strands and insoluble, high-molecular weight murein sacculi, with the concomitant formation of a 1,6-anhydromuramoyl product. Lytic transglycosylases (LTs) play an integral role in the metabolism of the peptidoglycan (PG) sacculus. Their lytic action creates space within the PG sacculus to allow for its expansion as well as for the insertion of various structures such as secretion systems and flagella. The chain is Membrane-bound lytic murein transglycosylase F from Marinobacter nauticus (strain ATCC 700491 / DSM 11845 / VT8) (Marinobacter aquaeolei).